The sequence spans 248 residues: UDP-2,3-diacylglucosamine hydrolase (248 aa).

Mn(2+)-binding residues include Asp7, His9, Asp40, Asn78, and His113. Position 78–79 (78–79 (NR)) interacts with substrate. 5 residues coordinate substrate: Asp121, Ser159, Thr163, Lys166, and His194. Residues His194 and His196 each coordinate Mn(2+).

It belongs to the LpxH family. Requires Mn(2+) as cofactor.

The protein resides in the cell inner membrane. It carries out the reaction UDP-2-N,3-O-bis[(3R)-3-hydroxytetradecanoyl]-alpha-D-glucosamine + H2O = 2-N,3-O-bis[(3R)-3-hydroxytetradecanoyl]-alpha-D-glucosaminyl 1-phosphate + UMP + 2 H(+). It participates in glycolipid biosynthesis; lipid IV(A) biosynthesis; lipid IV(A) from (3R)-3-hydroxytetradecanoyl-[acyl-carrier-protein] and UDP-N-acetyl-alpha-D-glucosamine: step 4/6. In terms of biological role, hydrolyzes the pyrophosphate bond of UDP-2,3-diacylglucosamine to yield 2,3-diacylglucosamine 1-phosphate (lipid X) and UMP by catalyzing the attack of water at the alpha-P atom. Involved in the biosynthesis of lipid A, a phosphorylated glycolipid that anchors the lipopolysaccharide to the outer membrane of the cell. This Pseudomonas syringae pv. syringae (strain B728a) protein is UDP-2,3-diacylglucosamine hydrolase.